A 99-amino-acid polypeptide reads, in one-letter code: uncharacterized protein (99 aa).

The tract at residues 1–99 (MSDFPPSYQQ…KYHSKSDVGF (99 aa)) is disordered. Positions 19–29 (QESSTSNNASE) are enriched in polar residues.

This is an uncharacterized protein from Schizosaccharomyces pombe (strain 972 / ATCC 24843) (Fission yeast).